A 189-amino-acid chain; its full sequence is Peptidyl-tRNA hydrolase (189 aa).

Tyr14 provides a ligand contact to tRNA. His19 acts as the Proton acceptor in catalysis. Positions 64, 66, and 112 each coordinate tRNA.

The protein belongs to the PTH family. As to quaternary structure, monomer.

Its subcellular location is the cytoplasm. The enzyme catalyses an N-acyl-L-alpha-aminoacyl-tRNA + H2O = an N-acyl-L-amino acid + a tRNA + H(+). In terms of biological role, hydrolyzes ribosome-free peptidyl-tRNAs (with 1 or more amino acids incorporated), which drop off the ribosome during protein synthesis, or as a result of ribosome stalling. Its function is as follows. Catalyzes the release of premature peptidyl moieties from peptidyl-tRNA molecules trapped in stalled 50S ribosomal subunits, and thus maintains levels of free tRNAs and 50S ribosomes. The protein is Peptidyl-tRNA hydrolase of Sphingopyxis alaskensis (strain DSM 13593 / LMG 18877 / RB2256) (Sphingomonas alaskensis).